A 488-amino-acid polypeptide reads, in one-letter code: Phenylalanine--tRNA ligase alpha subunit (488 aa).

Residues threonine 315, 354 to 356 (QLD), phenylalanine 394, and phenylalanine 419 each bind L-phenylalanine.

This sequence belongs to the class-II aminoacyl-tRNA synthetase family. Phe-tRNA synthetase alpha subunit type 2 subfamily. As to quaternary structure, tetramer of two alpha and two beta subunits. The cofactor is Mg(2+).

The protein localises to the cytoplasm. It carries out the reaction tRNA(Phe) + L-phenylalanine + ATP = L-phenylalanyl-tRNA(Phe) + AMP + diphosphate + H(+). The protein is Phenylalanine--tRNA ligase alpha subunit of Pyrobaculum arsenaticum (strain DSM 13514 / JCM 11321 / PZ6).